Consider the following 54-residue polypeptide: Hydrophobic protein RCI2A (54 aa).

2 helical membrane-spanning segments follow: residues 2-22 and 32-52; these read STAT…GVFL and ICLV…IYVL.

It belongs to the UPF0057 (PMP3) family.

Its subcellular location is the membrane. This chain is Hydrophobic protein RCI2A (RCI2A), found in Arabidopsis thaliana (Mouse-ear cress).